Reading from the N-terminus, the 124-residue chain is MKFAVAIAFTLLVCVFAQEEEEPVTCGGKQCKPNSCCVQNSHGKGKDSPRCHPLGKLNNPCEVEPNENGIYSQHCPCGEGLSCTKVGEPNKLRCQEESGKSDKSKESQGSDESEESEESKESSG.

An N-terminal signal peptide occupies residues 1-17 (MKFAVAIAFTLLVCVFA). Cystine bridges form between cysteine 26–cysteine 37, cysteine 31–cysteine 51, cysteine 36–cysteine 75, cysteine 61–cysteine 83, and cysteine 77–cysteine 94. Residues 93 to 108 (RCQEESGKSDKSKESQ) are compositionally biased toward basic and acidic residues. The interval 93 to 124 (RCQEESGKSDKSKESQGSDESEESEESKESSG) is disordered. Residues 109–118 (GSDESEESEE) show a composition bias toward acidic residues.

It belongs to the neurotoxin 32 family. In terms of tissue distribution, expressed by the venom gland.

It localises to the secreted. The protein is U33-theraphotoxin-Cg1c of Chilobrachys guangxiensis (Chinese earth tiger tarantula).